Reading from the N-terminus, the 243-residue chain is Carboxy-S-adenosyl-L-methionine synthase (243 aa).

Residues Tyr-40, 65 to 67 (GCS), 90 to 91 (DN), 118 to 119 (DI), Asn-133, and Arg-200 contribute to the S-adenosyl-L-methionine site.

Belongs to the class I-like SAM-binding methyltransferase superfamily. Cx-SAM synthase family. As to quaternary structure, homodimer.

It catalyses the reaction prephenate + S-adenosyl-L-methionine = carboxy-S-adenosyl-L-methionine + 3-phenylpyruvate + H2O. Catalyzes the conversion of S-adenosyl-L-methionine (SAM) to carboxy-S-adenosyl-L-methionine (Cx-SAM). The sequence is that of Carboxy-S-adenosyl-L-methionine synthase from Shewanella sp. (strain MR-7).